A 387-amino-acid polypeptide reads, in one-letter code: Decapping nuclease RAI1 (387 aa).

E172 is an a divalent metal cation binding site. The residue at position 198 (S198) is a Phosphoserine. E221 is a substrate binding site. A divalent metal cation contacts are provided by D223, E241, and L242. Substrate contacts are provided by K243 and Q267. Residues 273–387 (IPRIIYGFKD…GFKEWRKSLK (115 aa)) are interaction with RAT1.

The protein belongs to the DXO/Dom3Z family. As to quaternary structure, interacts with RAT1, RTT103 and pre-60S ribosomal subunits. Interacts with RAT1; the interaction is direct, stabilizes RAT1 protein structure and stimulates its exoribonuclease activity. The interaction also stimulates RAI1 pyrophosphohydrolase activity, probably by recruiting it to mRNA substrates. Requires a divalent metal cation as cofactor.

It localises to the nucleus. It catalyses the reaction a 5'-end NAD(+)-phospho-ribonucleoside in mRNA + H2O = a 5'-end phospho-ribonucleoside in mRNA + NAD(+) + H(+). The catalysed reaction is a 5'-end (N(7)-methyl 5'-triphosphoguanosine)-ribonucleoside-ribonucleotide in mRNA + H2O = a (N(7)-methyl 5'-triphosphoguanosine)-nucleoside + a 5'-end phospho-ribonucleoside in mRNA + H(+). The enzyme catalyses a 5'-end triphospho-ribonucleoside in mRNA + H2O = a 5'-end phospho-ribonucleoside in mRNA + diphosphate + H(+). In terms of biological role, decapping enzyme for NAD-capped RNAs: specifically hydrolyzes the nicotinamide adenine dinucleotide (NAD) cap from a subset of RNAs by removing the entire NAD moiety from the 5'-end of an NAD-capped RNA. The NAD-cap is present at the 5'-end of some RNAs and snoRNAs. In contrast to the canonical 5'-end N7 methylguanosine (m7G) cap, the NAD cap promotes mRNA decay. Also acts as a non-canonical decapping enzyme that removes the entire cap structure of m7G capped or incompletely capped RNAs. Has decapping activity toward incomplete 5'-end m7G cap mRNAs such as unmethylated 5'-end-capped RNA (cap0), while it has no activity toward 2'-O-ribose methylated m7G cap (cap1). Also possesses RNA 5'-pyrophosphohydrolase activity by hydrolyzing the 5'-end triphosphate to release pyrophosphates. Stimulates exoribonuclease activity of RAT1, allowing it to degrade RNAs with stable secondary structure more effectively. Required for the processing of nuclear mRNA and rRNA precursors. May promote termination of transcription by RNA polymerase II. This Saccharomyces cerevisiae (strain ATCC 204508 / S288c) (Baker's yeast) protein is Decapping nuclease RAI1.